We begin with the raw amino-acid sequence, 203 residues long: Sec-independent protein translocase protein TatB (203 aa).

A helical transmembrane segment spans residues 1–21; it reads MFDIGWTELLVIAVVLIVVVG. Residues 179 to 203 form a disordered region; that stretch reads KPKRTTAVRKPATLKKPAQTKKDEA.

It belongs to the TatB family. As to quaternary structure, the Tat system comprises two distinct complexes: a TatABC complex, containing multiple copies of TatA, TatB and TatC subunits, and a separate TatA complex, containing only TatA subunits. Substrates initially bind to the TatABC complex, which probably triggers association of the separate TatA complex to form the active translocon.

It is found in the cell inner membrane. Part of the twin-arginine translocation (Tat) system that transports large folded proteins containing a characteristic twin-arginine motif in their signal peptide across membranes. Together with TatC, TatB is part of a receptor directly interacting with Tat signal peptides. TatB may form an oligomeric binding site that transiently accommodates folded Tat precursor proteins before their translocation. This is Sec-independent protein translocase protein TatB from Rhizobium johnstonii (strain DSM 114642 / LMG 32736 / 3841) (Rhizobium leguminosarum bv. viciae).